Consider the following 178-residue polypeptide: Vegetative protein (178 aa).

Disordered stretches follow at residues 67–102 (AGRR…AAAG) and 138–158 (NRRP…DIKL). The segment covering 76-90 (PAARSAVTAAPAAVG) has biased composition (low complexity).

The sequence is that of Vegetative protein (vegA) from Myxococcus xanthus.